The following is a 348-amino-acid chain: S-adenosyl-L-methionine-dependent methyl transferase PigF (348 aa).

Residue Glu199 coordinates S-adenosyl-L-methionine. Catalysis depends on His247, which acts as the Proton acceptor.

It belongs to the class I-like SAM-binding methyltransferase superfamily. Cation-independent O-methyltransferase family.

It participates in antibiotic biosynthesis; prodigiosin biosynthesis. Functionally, involved in the biosynthesis of 4-methoxy-2,2'-bipyrrole-5-carbaldehyde (MBC), one of the terminal products involved in the biosynthesis of the red antibiotic prodigiosin (Pig). Catalyzes the transfer of a methyl group from S-adenosyl-L-methionine (SAM) to the hydroxyl group of 4-hydroxy-2,2'-bipyrrole-5-carbaldehyde (HBC) to yield 4-methoxy-2,2'-bipyrrole-5-carbaldehyde (MBC). The polypeptide is S-adenosyl-L-methionine-dependent methyl transferase PigF (Serratia sp. (strain ATCC 39006) (Prodigiosinella confusarubida)).